Here is a 137-residue protein sequence, read N- to C-terminus: Small heat shock protein IbpA (137 aa).

Residues 28–137 (SQSNGGYPPY…AKKPRRIEIN (110 aa)) form the sHSP domain.

Belongs to the small heat shock protein (HSP20) family. In terms of assembly, monomer. Forms homomultimers of about 100-150 subunits at optimal growth temperatures. Conformation changes to monomers at high temperatures or high ionic concentrations.

It is found in the cytoplasm. In terms of biological role, associates with aggregated proteins, together with IbpB, to stabilize and protect them from irreversible denaturation and extensive proteolysis during heat shock and oxidative stress. Aggregated proteins bound to the IbpAB complex are more efficiently refolded and reactivated by the ATP-dependent chaperone systems ClpB and DnaK/DnaJ/GrpE. Its activity is ATP-independent. This chain is Small heat shock protein IbpA, found in Shigella sonnei (strain Ss046).